The chain runs to 953 residues: Pyruvate, phosphate dikinase, chloroplastic (953 aa).

The transit peptide at 1-77 (MMSSLSVEGM…VLNPVSPPVT (77 aa)) directs the protein to the chloroplast. The disordered stretch occupies residues 55–74 (PELRSSGLTPPRAVLNPVSP). The residue at position 533 (T533) is a Phosphothreonine; by PDRP1. The active-site Tele-phosphohistidine intermediate is the H535. Substrate-binding residues include R641, R698, E827, G848, T849, N850, and D851. E827 serves as a coordination point for Mg(2+). D851 lines the Mg(2+) pocket. Residue C913 is the Proton donor of the active site.

The protein belongs to the PEP-utilizing enzyme family. In terms of assembly, homotetramer. Mg(2+) serves as cofactor. Phosphorylation of Thr-533 in the dark inactivates the enzyme. Dephosphorylation upon light stimulation reactivates the enzyme. In terms of tissue distribution, isoform 1 mainly localized in mesophyll cells and only a low level is found in bundle sheath cells. Isoform 2 is expressed in roots and stems.

It localises to the plastid. Its subcellular location is the chloroplast. The protein resides in the cytoplasm. The catalysed reaction is pyruvate + phosphate + ATP = phosphoenolpyruvate + AMP + diphosphate + H(+). It participates in photosynthesis; C4 acid pathway. Activated by light-induced dephosphorylation. Inhibited by dark-induced phosphorylation. Both reactions are catalyzed by PDRP1. Functionally, formation of phosphoenolpyruvate, which is the primary acceptor of CO(2) in C4 and some Crassulacean acid metabolism plants. The sequence is that of Pyruvate, phosphate dikinase, chloroplastic (PPDK) from Flaveria trinervia (Clustered yellowtops).